A 387-amino-acid chain; its full sequence is Polyadenylate-binding protein RBP45A (387 aa).

RRM domains are found at residues 60 to 140 (KSLW…WAQA), 154 to 233 (HTIF…PAAN), and 260 to 332 (TTIF…WGRS). Positions 329-342 (WGRSPNKQSDQAQW) are enriched in polar residues. The disordered stretch occupies residues 329–387 (WGRSPNKQSDQAQWNGGGYYGYPPQPQGGYGYAAQPPTQDPNAYYGGYTGYGNYQQQRQ).

This sequence belongs to the polyadenylate-binding RBP45 family. As to quaternary structure, interacts with the poly(A) tail of mRNA in nucleus. Mostly expressed in seedlings, and, to a lower extent, in leaves, stems, and flowers. Present in immature anther tissues (tapetum cells) and mature pollen grains.

The protein resides in the nucleus. In terms of biological role, heterogeneous nuclear ribonucleoprotein (hnRNP)-protein binding the poly(A) tail of mRNA and probably involved in some steps of pre-mRNA maturation. This chain is Polyadenylate-binding protein RBP45A (RBP45A), found in Arabidopsis thaliana (Mouse-ear cress).